Consider the following 503-residue polypeptide: Glutamate--tRNA ligase (503 aa).

A 'HIGH' region motif is present at residues 12-22 (PSPTGYLHVGG). The 'KMSKS' region signature appears at 259 to 263 (KLSKR). Lysine 262 provides a ligand contact to ATP.

The protein belongs to the class-I aminoacyl-tRNA synthetase family. Glutamate--tRNA ligase type 1 subfamily. In terms of assembly, monomer.

It is found in the cytoplasm. The catalysed reaction is tRNA(Glu) + L-glutamate + ATP = L-glutamyl-tRNA(Glu) + AMP + diphosphate. Its function is as follows. Catalyzes the attachment of glutamate to tRNA(Glu) in a two-step reaction: glutamate is first activated by ATP to form Glu-AMP and then transferred to the acceptor end of tRNA(Glu). This is Glutamate--tRNA ligase from Chlorobaculum parvum (strain DSM 263 / NCIMB 8327) (Chlorobium vibrioforme subsp. thiosulfatophilum).